A 479-amino-acid polypeptide reads, in one-letter code: NAC domain-containing protein 45 (479 aa).

The NAC domain occupies 6 to 157; that stretch reads LPPGFRFHPT…AYALCRVFKK (152 aa). A DNA-binding region spans residues 105-163; it reads IGTKKTLVYYRGRAPHGIRTGWVMHEYRLDETECEPSAYGMQDAYALCRVFKKIVIEAK.

Expressed in a few sieve element cells before enucleation and in phloem-pole pericycle cells.

It localises to the nucleus. Its function is as follows. Transcription factor directing sieve element enucleation and cytosol degradation. Not required for formation of lytic vacuoles. Regulates, with NAC086, the transcription of NEN1, NEN2, NEN3, NEN4, RTM1, RTM2, UBP16, PLDZETA, ABCB10 and At1g26450. This chain is NAC domain-containing protein 45, found in Arabidopsis thaliana (Mouse-ear cress).